We begin with the raw amino-acid sequence, 213 residues long: Kynurenine formamidase (213 aa).

Substrate is bound at residue W20. Residues H50, H54, and D56 each coordinate Zn(2+). H60 acts as the Proton donor/acceptor in catalysis. Zn(2+)-binding residues include H161 and E173.

Belongs to the Cyclase 1 superfamily. KynB family. In terms of assembly, homodimer. Requires Zn(2+) as cofactor.

It catalyses the reaction N-formyl-L-kynurenine + H2O = L-kynurenine + formate + H(+). It functions in the pathway amino-acid degradation; L-tryptophan degradation via kynurenine pathway; L-kynurenine from L-tryptophan: step 2/2. Its function is as follows. Catalyzes the hydrolysis of N-formyl-L-kynurenine to L-kynurenine, the second step in the kynurenine pathway of tryptophan degradation. The protein is Kynurenine formamidase of Pseudomonas paraeruginosa (strain DSM 24068 / PA7) (Pseudomonas aeruginosa (strain PA7)).